The sequence spans 367 residues: Phospho-N-acetylmuramoyl-pentapeptide-transferase (367 aa).

The next 10 membrane-spanning stretches (helical) occupy residues 34–54 (GAVVTGALFVFLFGPWIIDHL), 78–98 (TPTMGGLMILSGLTVGTVLWA), 101–121 (LNPYVWIVLAVTLGFGFVGFY), 135–155 (FGSKLRLLIEAAIALVACYAL), 175–195 (TVLHFGWFFVVFGAFVIVGAG), 206–226 (GLAIVPVMIATASFAMIAYLA), 246–266 (LAVLCGALLGAGLGFLWFNAP), 270–290 (IFMGDTGSLALGGMLGAIAVA), 295–315 (IVLAVIGGLFVLEAVSVIVQV), and 344–364 (QIVIRFWIISVMLALAGLSTL).

It belongs to the glycosyltransferase 4 family. MraY subfamily. Mg(2+) serves as cofactor.

It localises to the cell inner membrane. It catalyses the reaction UDP-N-acetyl-alpha-D-muramoyl-L-alanyl-gamma-D-glutamyl-meso-2,6-diaminopimeloyl-D-alanyl-D-alanine + di-trans,octa-cis-undecaprenyl phosphate = di-trans,octa-cis-undecaprenyl diphospho-N-acetyl-alpha-D-muramoyl-L-alanyl-D-glutamyl-meso-2,6-diaminopimeloyl-D-alanyl-D-alanine + UMP. Its pathway is cell wall biogenesis; peptidoglycan biosynthesis. In terms of biological role, catalyzes the initial step of the lipid cycle reactions in the biosynthesis of the cell wall peptidoglycan: transfers peptidoglycan precursor phospho-MurNAc-pentapeptide from UDP-MurNAc-pentapeptide onto the lipid carrier undecaprenyl phosphate, yielding undecaprenyl-pyrophosphoryl-MurNAc-pentapeptide, known as lipid I. This chain is Phospho-N-acetylmuramoyl-pentapeptide-transferase, found in Bradyrhizobium diazoefficiens (strain JCM 10833 / BCRC 13528 / IAM 13628 / NBRC 14792 / USDA 110).